A 116-amino-acid polypeptide reads, in one-letter code: Probable early E4 11 kDa protein (116 aa).

The sequence is that of Probable early E4 11 kDa protein from Human adenovirus A serotype 12 (HAdV-12).